The primary structure comprises 527 residues: Formate--tetrahydrofolate ligase (527 aa).

Residue 53–60 (TSSGEGKT) participates in ATP binding.

The protein belongs to the formate--tetrahydrofolate ligase family.

The catalysed reaction is (6S)-5,6,7,8-tetrahydrofolate + formate + ATP = (6R)-10-formyltetrahydrofolate + ADP + phosphate. It functions in the pathway one-carbon metabolism; tetrahydrofolate interconversion. The protein is Formate--tetrahydrofolate ligase of Acholeplasma laidlawii (strain PG-8A).